Reading from the N-terminus, the 588-residue chain is ATP-dependent lipid A-core flippase (588 aa).

6 helical membrane-spanning segments follow: residues 23-43, 56-76, 141-161, 162-182, 257-277, and 278-298; these read FWPV…IDAG, FITI…IGIT, DALT…TVMM, VICW…GIIV, LVIA…STVI, and TISA…IKPM. The ABC transmembrane type-1 domain maps to 28 to 310; the sequence is LLGVLANILY…LTTLNATIQR (283 aa). One can recognise an ABC transporter domain in the interval 342 to 576; it reads IEFKHVYHAY…DGHYAQLYKV (235 aa). 375-382 is a binding site for ATP; it reads GHSGSGKT.

The protein belongs to the ABC transporter superfamily. Lipid exporter (TC 3.A.1.106) family. Homodimer.

The protein resides in the cell inner membrane. The catalysed reaction is ATP + H2O + lipid A-core oligosaccharideSide 1 = ADP + phosphate + lipid A-core oligosaccharideSide 2.. Its function is as follows. Involved in lipopolysaccharide (LPS) biosynthesis. Translocates lipid A-core from the inner to the outer leaflet of the inner membrane. Transmembrane domains (TMD) form a pore in the inner membrane and the ATP-binding domain (NBD) is responsible for energy generation. In Legionella pneumophila (strain Lens), this protein is ATP-dependent lipid A-core flippase.